A 262-amino-acid chain; its full sequence is 5-methyltetrahydrofolate:corrinoid/iron-sulfur protein co-methyltransferase (262 aa).

A Pterin-binding domain is found at 1 to 246 (MLIIGERING…ETAATAEILL (246 aa)). 2 residues coordinate (6S)-5-methyl-5,6,7,8-tetrahydrofolate: N96 and D160. K184 serves as a coordination point for Ca(2+). (6S)-5-methyl-5,6,7,8-tetrahydrofolate-binding residues include N199, Q202, and R207. Methylcob(III)alamin is bound at residue 202 to 203 (QN). Ca(2+) is bound by residues G222 and D224.

Belongs to the vitamin-B12 dependent methionine synthase family. As to quaternary structure, heterohexamer composed of 2 subunits of AcsC, 2 subunits of AcsD and 2 subunits of AcsE. Ca(2+) is required as a cofactor.

The catalysed reaction is methyl-Co(III)-[corrinoid Fe-S protein] + (6S)-5,6,7,8-tetrahydrofolate = Co(I)-[corrinoid Fe-S protein] + (6S)-5-methyl-5,6,7,8-tetrahydrofolate + H(+). Its function is as follows. Methyltransferase that mediates the transfer of a N5-methyl group of (6S)-methyltetrahydrofolate to the 5-methoxybenzimidazolylcobamide cofactor of a corrinoid/Fe-S protein (AcsC/AcsD) in the anaerobic acetyl-CoA pathway (Wood-Ljungdahl pathway) of carbon monoxide and carbon dioxide fixation. The polypeptide is 5-methyltetrahydrofolate:corrinoid/iron-sulfur protein co-methyltransferase (acsE) (Moorella thermoacetica (Clostridium thermoaceticum)).